The sequence spans 118 residues: T cell receptor gamma variable 5 (118 aa).

An N-terminal signal peptide occupies residues 1-17; sequence MRWALLVLLAFLSPASQ. The region spanning 18–118 is the Ig-like domain; sequence KSSNLEGGTK…GVYYCATWDR (101 aa). A disulfide bridge connects residues C41 and C113. An N-linked (GlcNAc...) asparagine glycan is attached at N106.

In terms of assembly, gamma-delta TR is a heterodimer composed of a gamma and delta chain; disulfide-linked. The gamma-delta TR is associated with the transmembrane signaling CD3 coreceptor proteins following the stoichiometry: a single gamma-delta TR heterodimer associates with one CD3D-CD3E heterodimer, one CD3G-CD3E heterodimer and one CD247 homodimer forming a stable octameric structure. Upon activation, gamma-delta TR complex associates with FCER1G to initiate intracellular signaling.

The protein resides in the cell membrane. Functionally, v region of the variable domain of T cell receptor (TR) gamma chain that participates in the antigen recognition. Gamma-delta TRs recognize a variety of self and foreign non-peptide antigens frequently expressed at the epithelial boundaries between the host and external environment, including endogenous lipids presented by MH-like protein CD1D and phosphoantigens presented by butyrophilin-like molecule BTN3A1. Upon antigen recognition induces rapid, innate-like immune responses involved in pathogen clearance and tissue repair. Binding of gamma-delta TR complex to antigen triggers phosphorylation of immunoreceptor tyrosine-based activation motifs (ITAMs) in the CD3 chains by the LCK and FYN kinases, allowing the recruitment, phosphorylation, and activation of ZAP70 that facilitates phosphorylation of the scaffolding proteins LCP2 and LAT. This lead to the formation of a supramolecular signalosome that recruits the phospholipase PLCG1, resulting in calcium mobilization and ERK activation, ultimately leading to T cell expansion and differentiation into effector cells. Gamma-delta TRs are produced through somatic rearrangement of a limited repertoire of variable (V), diversity (D), and joining (J) genes. The potential diversity of gamma-delta TRs is conferred by the unique ability to rearrange (D) genes in tandem and to utilize all three reading frames. The combinatorial diversity is considerably increased by the sequence exonuclease trimming and random nucleotide (N) region additions which occur during the V-(D)-J rearrangements. The polypeptide is T cell receptor gamma variable 5 (Homo sapiens (Human)).